Reading from the N-terminus, the 201-residue chain is Ribonuclease HII (201 aa).

The region spanning 10–200 is the RNase H type-2 domain; sequence LIEAGCDEAG…LGDGQLELFS (191 aa). A divalent metal cation contacts are provided by Asp-16, Glu-17, and Asp-108.

This sequence belongs to the RNase HII family. The cofactor is Mn(2+). It depends on Mg(2+) as a cofactor.

The protein localises to the cytoplasm. The enzyme catalyses Endonucleolytic cleavage to 5'-phosphomonoester.. Functionally, endonuclease that specifically degrades the RNA of RNA-DNA hybrids. The polypeptide is Ribonuclease HII (Bacteroides fragilis (strain YCH46)).